The primary structure comprises 34 residues: MSDIN-like toxin proprotein 12 (34 aa).

Residues 1–10 (MSDINATRLP) constitute a propeptide that is removed on maturation. The segment at residues 11 to 19 (HPFPLGLQP) is a cross-link (cyclopeptide (His-Pro)). A propeptide spanning residues 20–34 (CAGDVDNLTLTKGEG) is cleaved from the precursor.

Belongs to the MSDIN fungal toxin family. Post-translationally, processed by the macrocyclase-peptidase enzyme POPB to yield a toxic cyclic nonapeptide. POPB first removes 10 residues from the N-terminus. Conformational trapping of the remaining peptide forces the enzyme to release this intermediate rather than proceed to macrocyclization. The enzyme rebinds the remaining peptide in a different conformation and catalyzes macrocyclization of the N-terminal 9 residues.

Probable toxin that belongs to the MSDIN-like toxin family responsible for a large number of food poisoning cases and deaths. The protein is MSDIN-like toxin proprotein 12 of Amanita bisporigera (Destroying angel).